The following is an 88-amino-acid chain: Conotoxin VxVIB (88 aa).

The first 22 residues, 1–22 (MNLACVLIVAVLFLTASQLATA), serve as a signal peptide directing secretion. Positions 23–52 (ASYARDKQEYPAVRSSDEMQDSEDLTLTKE) are excised as a propeptide. Disulfide bonds link cysteine 53–cysteine 68, cysteine 60–cysteine 72, and cysteine 67–cysteine 81.

In terms of tissue distribution, expressed by the venom duct.

The protein localises to the secreted. In terms of biological role, may act as a neurotoxin, but produces no obvious effect on ionic currents when tested on the mouse dorsal rooted ganglia (DRG). This Conus vexillum (Flag cone) protein is Conotoxin VxVIB.